We begin with the raw amino-acid sequence, 669 residues long: Probable serine/threonine-protein kinase DDB_G0291918 (669 aa).

A Protein kinase domain is found at 13 to 360 (YNNIKELGRG…LKETLNHPFL (348 aa)). Residues 19–27 (LGRGVSGVV) and K42 each bind ATP. Residue D141 is the Proton acceptor of the active site. Over residues 396–405 (QNQQQQQQQQ) the composition is skewed to low complexity. 2 disordered regions span residues 396-518 (QNQQ…APTF) and 530-550 (FPKL…MNWR). Polar residues predominate over residues 406-418 (KSFSTSSLPQVNH). Low complexity-rich tracts occupy residues 419 to 449 (NNDT…NNNN) and 457 to 494 (QSNN…SSTD).

Belongs to the protein kinase superfamily. Ser/Thr protein kinase family.

The enzyme catalyses L-seryl-[protein] + ATP = O-phospho-L-seryl-[protein] + ADP + H(+). The catalysed reaction is L-threonyl-[protein] + ATP = O-phospho-L-threonyl-[protein] + ADP + H(+). The polypeptide is Probable serine/threonine-protein kinase DDB_G0291918 (Dictyostelium discoideum (Social amoeba)).